A 437-amino-acid polypeptide reads, in one-letter code: Adenylosuccinate synthetase (437 aa).

Residues 12–18 (GDEGKGK) and 40–42 (GHT) each bind GTP. The active-site Proton acceptor is the Asp-13. Mg(2+)-binding residues include Asp-13 and Gly-40. Residues 13–16 (DEGK), 38–41 (NAGH), Thr-128, Arg-142, Gln-223, Thr-238, and Arg-302 each bind IMP. The active-site Proton donor is the His-41. 298-304 (TTTGRRR) is a substrate binding site. Residues Arg-304, 330–332 (KLD), and 412–414 (SLG) contribute to the GTP site.

This sequence belongs to the adenylosuccinate synthetase family. In terms of assembly, homodimer. Requires Mg(2+) as cofactor.

The protein localises to the cytoplasm. The catalysed reaction is IMP + L-aspartate + GTP = N(6)-(1,2-dicarboxyethyl)-AMP + GDP + phosphate + 2 H(+). It functions in the pathway purine metabolism; AMP biosynthesis via de novo pathway; AMP from IMP: step 1/2. Plays an important role in the de novo pathway of purine nucleotide biosynthesis. Catalyzes the first committed step in the biosynthesis of AMP from IMP. This Synechococcus sp. (strain CC9311) protein is Adenylosuccinate synthetase.